The primary structure comprises 452 residues: Pup--protein ligase (452 aa).

Glu9 provides a ligand contact to Mg(2+). Residue Arg53 coordinates ATP. Position 55 (Tyr55) interacts with Mg(2+). Catalysis depends on Asp57, which acts as the Proton acceptor. Position 63 (Glu63) interacts with Mg(2+). ATP contacts are provided by Thr66 and Trp419.

Belongs to the Pup ligase/Pup deamidase family. Pup-conjugating enzyme subfamily.

It carries out the reaction ATP + [prokaryotic ubiquitin-like protein]-L-glutamate + [protein]-L-lysine = ADP + phosphate + N(6)-([prokaryotic ubiquitin-like protein]-gamma-L-glutamyl)-[protein]-L-lysine.. Its pathway is protein degradation; proteasomal Pup-dependent pathway. It participates in protein modification; protein pupylation. Functionally, catalyzes the covalent attachment of the prokaryotic ubiquitin-like protein modifier Pup to the proteasomal substrate proteins, thereby targeting them for proteasomal degradation. This tagging system is termed pupylation. The ligation reaction involves the side-chain carboxylate of the C-terminal glutamate of Pup and the side-chain amino group of a substrate lysine. This Gordonia bronchialis (strain ATCC 25592 / DSM 43247 / BCRC 13721 / JCM 3198 / KCTC 3076 / NBRC 16047 / NCTC 10667) (Rhodococcus bronchialis) protein is Pup--protein ligase.